Consider the following 310-residue polypeptide: Haloalkane dehalogenase (310 aa).

The AB hydrolase-1 domain occupies 49-295 (VFLCLHGEPT…DAGHFVQEFG (247 aa)). The active-site Nucleophile is Asp-124. Trp-125 and Trp-175 together coordinate chloride. Asp-260 serves as the catalytic Proton donor. The active-site Proton acceptor is His-289.

The protein belongs to the haloalkane dehalogenase family. Type 1 subfamily. In terms of assembly, monomer.

The catalysed reaction is 1-haloalkane + H2O = a halide anion + a primary alcohol + H(+). It catalyses the reaction 1,2-dichloroethane + H2O = 2-chloroethanol + chloride + H(+). It functions in the pathway xenobiotic degradation; 1,2-dichloroethane degradation; glycolate from 1,2-dichloroethane: step 1/4. With respect to regulation, inhibited by thiol reagents such as p-chloromercuribenzoate and iodoacetamide. In terms of biological role, catalyzes hydrolytic cleavage of carbon-halogen bonds in halogenated aliphatic compounds, leading to the formation of the corresponding primary alcohols, halide ions and protons. Has a broad substrate specificity, which includes terminally mono- and di- chlorinated and brominated alkanes (up to C4 only). The highest activity was found with 1,2-dichloroethane, 1,3-dichloropropane, and 1,2-dibromoethane. This chain is Haloalkane dehalogenase (dhlA), found in Xanthobacter autotrophicus.